Reading from the N-terminus, the 81-residue chain is Large ribosomal subunit protein bL31B (81 aa).

Belongs to the bacterial ribosomal protein bL31 family. Type B subfamily. In terms of assembly, part of the 50S ribosomal subunit.

This is Large ribosomal subunit protein bL31B from Cutibacterium acnes (strain DSM 16379 / KPA171202) (Propionibacterium acnes).